An 83-amino-acid polypeptide reads, in one-letter code: uncharacterized protein (83 aa).

Helical transmembrane passes span 23–43 and 49–69; these read GGCYFAFMGVAWVLLAISAIA and SLWWDIWSLGLLVLIPAVVYG.

The protein resides in the cell membrane. This is an uncharacterized protein from Mycobacterium tuberculosis (strain CDC 1551 / Oshkosh).